Consider the following 128-residue polypeptide: Large ribosomal subunit protein uL24 (128 aa).

This sequence belongs to the universal ribosomal protein uL24 family. As to quaternary structure, part of the 50S ribosomal subunit.

Functionally, one of two assembly initiator proteins, it binds directly to the 5'-end of the 23S rRNA, where it nucleates assembly of the 50S subunit. In terms of biological role, located at the polypeptide exit tunnel on the outside of the subunit. This chain is Large ribosomal subunit protein uL24, found in Pyrobaculum calidifontis (strain DSM 21063 / JCM 11548 / VA1).